Reading from the N-terminus, the 58-residue chain is uncharacterized protein (58 aa).

Residues 3-52 (KVILEHLQRIEKQLEILNSKIENFLGFEELSEEELKELDEIEAKMEKGEK) adopt a coiled-coil conformation.

This is an uncharacterized protein from Archaeoglobus fulgidus (strain ATCC 49558 / DSM 4304 / JCM 9628 / NBRC 100126 / VC-16).